The primary structure comprises 921 residues: MPPKAPRRAAAAEPPPPPPPPPREDDPAQDSGPEELPLARLEFEEIEEPEFIALCQKLKVPDHVRERAWLTWEKVSSVDGILEGYIQKKKELWGICIFIAAVDLDEMPFTFTELQKSIETSVYKFFDLLKEIDTSTKVDNAMSRLLKKYNVLCALYSKLERTCELIYLTQPSSALSTEINSMLVLKISWITFLLAKGEVLQMEDDLVISFQLMLCVVDYFIKFSPPALLREPYKTAAIPINGSPRTPRRGQNRSARIAKQLENDTRIIEVLCKEHECNIDEVKNVYFKNFIPFINSLGIVSSNGLPEVESLSKRYEEVYLKNKDLDARLFLDHDKTLQTDPIDSFETERTPRKNNPDEEANVVTPHTPVRTVMNTIQQLMVILNSASDQPSENLISYFNNCTVNPKENILKRVKDVGHIFKEKFANAVGQGCVDIGVQRYKLGVRLYYRVMESMLKSEEERLSIQNFSKLLNDNIFHMSLLACALEVVMATYSRSTLQHLDSGTDLSFPWILNVLNLKAFDFYKVIESFIKVEANLTREMIKHLERCEHRIMESLAWLSDSPLFDLIKQSKDGEGPDNLEPACPLSLPLQGNHTAADMYLSPLRSPKKRTSTTRVNSAANTETQAASAFHTQKPLKSTSLALFYKKVYRLAYLRLNTLCARLLSDHPELEHIIWTLFQHTLQNEYELMRDRHLDQIMMCSMYGICKVKNIDLKFKIIVTAYKDLPHAAQETFKRVLIREEEFDSIIVFYNSVFMQRLKTNILQYASTRPPTLSPIPHIPRSPYKFSSSPLRIPGGNIYISPLKSPYKISEGLPTPTKMTPRSRILVSIGESFGTSEKFQKINQMVCNSDRVLKRSAEGGNPPKPLKKLRFDIEGADEADGSKHLPAESKFQQKLAEMTSTRTRMQKQRMNESKDVSNKEEK.

Residues 1–36 are disordered; it reads MPPKAPRRAAAAEPPPPPPPPPREDDPAQDSGPEEL. A N,N-dimethylproline; by NTM1 modification is found at P2. S31 and S243 each carry phosphoserine. Residues T246, T350, T364, and T367 each carry the phosphothreonine modification. The interval 341–360 is disordered; the sequence is PIDSFETERTPRKNNPDEEA. A compositionally biased stretch (basic and acidic residues) spans 346-356; it reads ETERTPRKNNP. The tract at residues 367 to 573 is domain A; it reads TPVRTVMNTI…FDLIKQSKDG (207 aa). The tract at residues 367-764 is pocket; binds T and E1A; that stretch reads TPVRTVMNTI…QRLKTNILQY (398 aa). Position 561 is a phosphoserine; by CDK2 (S561). Residues 574–632 form a spacer region; sequence EGPDNLEPACPLSLPLQGNHTAADMYLSPLRSPKKRTSTTRVNSAANTETQAASAFHTQ. 3 positions are modified to phosphoserine: S601, S605, and S617. The interval 633-764 is domain B; the sequence is KPLKSTSLAL…QRLKTNILQY (132 aa). The tract at residues 756–921 is interaction with LIMD1; the sequence is RLKTNILQYA…SKDVSNKEEK (166 aa). Residues 764–921 are domain; mediates interaction with E4F1; sequence YASTRPPTLS…SKDVSNKEEK (158 aa). Phosphoserine is present on residues S773, S781, S788, and S800. An N6-methyllysine; by SMYD2 modification is found at K803. At S804 the chain carries Phosphoserine. 4 positions are modified to phosphothreonine: T814, T816, T819, and T834. S848 carries the post-translational modification Phosphoserine. K853 carries the N6-methyllysine; by SMYD2 modification. The Bipartite nuclear localization signal signature appears at 853 to 869; sequence KRSAEGGNPPKPLKKLR. N6-acetyllysine; by PCAF occurs at positions 866 and 867. Positions 872-921 are disordered; sequence IEGADEADGSKHLPAESKFQQKLAEMTSTRTRMQKQRMNESKDVSNKEEK. Residues 908-921 show a composition bias toward basic and acidic residues; it reads RMNESKDVSNKEEK.

This sequence belongs to the retinoblastoma protein (RB) family. As to quaternary structure, the hypophosphorylated form interacts with and sequesters the E2F1 transcription factor, thereby inhibiting E2F1 transcription. Interacts with heterodimeric E2F/DP transcription factor complexes containing TFDP1 and either E2F1/E2F, E2F3, E2F4 or E2F5, or TFDP2 and E2F4. Interacts (when hyperphosphorylated and hypophosphorylated) with PKP3; the interaction inhibits RB1 interaction with and repression of the transcription factor E2F1, potentially via sequestering RB1 to the cytoplasm. The unphosphorylated form interacts with EID1, ARID3B, KDM5A, SUV39H1, MJD2A/JHDM3A and THOC1. Interacts with the N-terminal domain of TAF1. Interacts with SNW1, ATAD5, AATF, DNMT1, LIN9, LMNA, KMT5B, KMT5C, PELP1, UHRF2, TMPO-alpha and USP4. Interacts with GRIP1 and UBR4. Interacts with ARID4A and KDM5B. Interacts with E4F1 and LIMD1. Interacts with SMARCA4/BRG1 and HDAC1. Interacts with USP4. Interacts (when methylated at Lys-853) with L3MBTL1. Binds to CDK1 and CDK2. Interacts with CHEK2; phosphorylates RB1. Interacts with PRMT2. Interacts with CEBPA. P-TEFB complex interacts with RB1; promotes phosphorylation of RB1. Interacts with RBBP9; the interaction disrupts RB1 binding to E2F1. Interacts with KAT2B/PCAF and EP300/P300. Interacts with PAX5. Interacts (phosphorylated and unphosphorylated) with BLCAP. May interact with NDC80. (Microbial infection) Interacts with adenovirus E1a protein. In terms of assembly, (Microbial infection) Interacts with SV40 large T antigen. Phosphorylated. Phosphorylated by CDK6 and CDK4, and subsequently by CDK2 at Ser-561 in G1, thereby releasing E2F1 which is then able to activate cell growth. Dephosphorylated at the late M phase. Phosphorylation of threonine residues in domain C promotes interaction between the C-terminal domain C and the Pocket domain, and thereby inhibits interactions with heterodimeric E2F/DP transcription factor complexes. Dephosphorylated at Ser-788 by calcineruin upon calcium stimulation. CDK3/cyclin-C-mediated phosphorylation at Ser-800 and Ser-804 is required for G0-G1 transition. Phosphorylated by CDK1 and CDK2 upon TGFB1-mediated apoptosis. In terms of processing, monomethylation at Lys-803 by SMYD2 enhances phosphorylation at Ser-800 and Ser-804, and promotes cell cycle progression. Monomethylation at Lys-853 by SMYD2 promotes interaction with L3MBTL1. N-terminus is methylated by METTL11A/NTM1. Post-translationally, acetylated in the skin. Acetylation at Lys-866 and Lys-867 regulates subcellular localization during keratinocytes differentiation. In terms of tissue distribution, expressed in the cell nuclei of renal tubules, hepatocytes and skeletal muscles. Expressed in skin (at protein level).

Its subcellular location is the nucleus. It localises to the cytoplasm. In terms of biological role, tumor suppressor that is a key regulator of the G1/S transition of the cell cycle. The hypophosphorylated form binds transcription regulators of the E2F family, preventing transcription of E2F-responsive genes. Both physically blocks E2Fs transactivating domain and recruits chromatin-modifying enzymes that actively repress transcription. Cyclin and CDK-dependent phosphorylation of RB1 induces its dissociation from E2Fs, thereby activating transcription of E2F responsive genes and triggering entry into S phase. RB1 also promotes the G0-G1 transition upon phosphorylation and activation by CDK3/cyclin-C. Directly involved in heterochromatin formation by maintaining overall chromatin structure and, in particular, that of constitutive heterochromatin by stabilizing histone methylation. Recruits and targets histone methyltransferases SUV39H1, KMT5B and KMT5C, leading to epigenetic transcriptional repression. Controls histone H4 'Lys-20' trimethylation. Inhibits the intrinsic kinase activity of TAF1. Mediates transcriptional repression by SMARCA4/BRG1 by recruiting a histone deacetylase (HDAC) complex to the c-FOS promoter. In resting neurons, transcription of the c-FOS promoter is inhibited by BRG1-dependent recruitment of a phospho-RB1-HDAC1 repressor complex. Upon calcium influx, RB1 is dephosphorylated by calcineurin, which leads to release of the repressor complex. This Mus musculus (Mouse) protein is Retinoblastoma-associated protein (Rb1).